The following is a 512-amino-acid chain: MNDLQFDSLKVFKCQNCHLPLQVDPTMLHLSKSQRELLLPREDRRPGVEEFNLRQESQDMLKKVKTGKEAKQLLKEDFQSSDFLFLRDIDDSIAEKDLKKGLEGDNDDRKSNEDSMVSELDVEDTAKTLSTQIERLSKLFEIMSTSESNIDYPICQECCNIMMKRLKTDYEKAVKERDLYFQFVKRIEKQQLDESDSSQLSLRQKEYTDQTKKINQERERLLLELTKKEQVEEELDAEIAELTRQISEKKANERATRKIDNAKQWDKMKLLNDISSLQYQYETELNKLDQLRKTNIYNESFRISHQGPFATICGLKLGSYEDHKVSYSEINAALGQLVLLLMTISSSLNIKISGYRLQPIGSTSKVSKFLADKEDWETYELYFSSNFSLEKIFKRETDFDKGMESLLDIVKQISLSFSTVVSSDTDINIQDERTRSNDSMLNGGANRNANLRADRLFTESELPYMIDGDRINGISVKLYGAEPNLEWTTAMKFLLTDAKWLLVFCSSKLSLQ.

The interval 294-511 is BARA; it reads TNIYNESFRI…LVFCSSKLSL (218 aa).

The protein belongs to the beclin family. Component of the autophagy-specific VPS34 PI3-kinase complex I composed of VPS15, VPS30, VPS34, ATG14 and ATG38; and of the VPS34 PI3-kinase complex II composed of VPS15, VPS30, VPS34 and VPS38.

The protein localises to the endosome membrane. Its subcellular location is the vacuole membrane. The protein resides in the preautophagosomal structure membrane. Required for cytoplasm to vacuole transport (Cvt), autophagy, nucleophagy, and mitophagy, as a part of the autophagy-specific VPS34 PI3-kinase complex I. This complex is essential to recruit the ATG8-phosphatidylinositol conjugate and the ATG12-ATG5 conjugate to the pre-autophagosomal structure. Also involved in endosome-to-Golgi retrograde transport as part of the VPS34 PI3-kinase complex II. This second complex is required for the endosome-to-Golgi retrieval of PEP1 and KEX2, and the recruitment of VPS5 and VPS7, two components of the retromer complex, to endosomal membranes (probably through the synthesis of a specific pool of phosphatidylinositol 3-phosphate recruiting the retromer to the endosomes). Required for survival and/or proliferation in kidneys but not brain. In Candida glabrata (strain ATCC 2001 / BCRC 20586 / JCM 3761 / NBRC 0622 / NRRL Y-65 / CBS 138) (Yeast), this protein is Vacuolar protein sorting-associated protein 30.